Consider the following 304-residue polypeptide: Aspartate carbamoyltransferase catalytic subunit (304 aa).

2 residues coordinate carbamoyl phosphate: Arg49 and Thr50. Lys77 lines the L-aspartate pocket. Arg99, His127, and Gln130 together coordinate carbamoyl phosphate. L-aspartate contacts are provided by Arg160 and Arg211. Carbamoyl phosphate is bound by residues Ala252 and Pro253.

This sequence belongs to the aspartate/ornithine carbamoyltransferase superfamily. ATCase family. In terms of assembly, heterododecamer (2C3:3R2) of six catalytic PyrB chains organized as two trimers (C3), and six regulatory PyrI chains organized as three dimers (R2).

It catalyses the reaction carbamoyl phosphate + L-aspartate = N-carbamoyl-L-aspartate + phosphate + H(+). Its pathway is pyrimidine metabolism; UMP biosynthesis via de novo pathway; (S)-dihydroorotate from bicarbonate: step 2/3. In terms of biological role, catalyzes the condensation of carbamoyl phosphate and aspartate to form carbamoyl aspartate and inorganic phosphate, the committed step in the de novo pyrimidine nucleotide biosynthesis pathway. The polypeptide is Aspartate carbamoyltransferase catalytic subunit (Bacillus cereus (strain ATCC 10987 / NRS 248)).